Consider the following 431-residue polypeptide: Glutamate--tRNA ligase 1 (431 aa).

The 'HIGH' region signature appears at 6-16 (PSPTGDMHIGN). A 'KMSKS' region motif is present at residues 235 to 239 (KMSKR). K238 contributes to the ATP binding site.

This sequence belongs to the class-I aminoacyl-tRNA synthetase family. Glutamate--tRNA ligase type 1 subfamily. As to quaternary structure, monomer.

The protein resides in the cytoplasm. It catalyses the reaction tRNA(Glu) + L-glutamate + ATP = L-glutamyl-tRNA(Glu) + AMP + diphosphate. Functionally, catalyzes the attachment of glutamate to tRNA(Glu) in a two-step reaction: glutamate is first activated by ATP to form Glu-AMP and then transferred to the acceptor end of tRNA(Glu). The sequence is that of Glutamate--tRNA ligase 1 from Campylobacter jejuni subsp. jejuni serotype O:6 (strain 81116 / NCTC 11828).